A 204-amino-acid polypeptide reads, in one-letter code: Leucyl/phenylalanyl-tRNA--protein transferase (204 aa).

Belongs to the L/F-transferase family.

It localises to the cytoplasm. The enzyme catalyses N-terminal L-lysyl-[protein] + L-leucyl-tRNA(Leu) = N-terminal L-leucyl-L-lysyl-[protein] + tRNA(Leu) + H(+). It catalyses the reaction N-terminal L-arginyl-[protein] + L-leucyl-tRNA(Leu) = N-terminal L-leucyl-L-arginyl-[protein] + tRNA(Leu) + H(+). It carries out the reaction L-phenylalanyl-tRNA(Phe) + an N-terminal L-alpha-aminoacyl-[protein] = an N-terminal L-phenylalanyl-L-alpha-aminoacyl-[protein] + tRNA(Phe). In terms of biological role, functions in the N-end rule pathway of protein degradation where it conjugates Leu, Phe and, less efficiently, Met from aminoacyl-tRNAs to the N-termini of proteins containing an N-terminal arginine or lysine. In Rhizobium etli (strain ATCC 51251 / DSM 11541 / JCM 21823 / NBRC 15573 / CFN 42), this protein is Leucyl/phenylalanyl-tRNA--protein transferase.